The sequence spans 521 residues: Importin subunit alpha-3 (521 aa).

N-acetylalanine is present on A2. In terms of domain architecture, IBB spans 2–58; the sequence is ADNEKLDNQRLKNFKNKGRDLETMRRQRNEVVVELRKNKRDEHLLKRRNVPQEDICE. The short motif at 43–52 is the Nuclear localization signal element; it reads EHLLKRRNVP. S60 carries the post-translational modification Phosphoserine. Residues 66 to 106 form an ARM 1; truncated repeat; the sequence is YRVQNTSLEAIVQNASSDNQGIQLSAVQAARKLLSSDRNPP. 8 ARM repeats span residues 107 to 149, 150 to 194, 195 to 233, 234 to 278, 279 to 318, 319 to 360, 361 to 400, and 401 to 443; these read IDDL…TSEQ, TQAV…CRDY, VISL…HKDP, PPPM…EQIQ, MVID…TDEQ, TQVV…NQQQ, VQAV…ISGR, and KDQV…KMAE. The tract at residues 137–229 is NLS binding site (major); it reads WALTNIASGT…VTWVMVNLCR (93 aa). The segment at 306 to 394 is NLS binding site (minor); sequence RAVGNIVTGT…QKEAAWAISN (89 aa). An ARM 10; atypical repeat occupies 447–485; it reads ETIANLIEECGGLEKIEQLQNHENEDIYKLAYEIIDQFF.

The protein belongs to the importin alpha family. Forms a complex with importin subunit beta-1 (KPNB1). Interacts with SNAI1. Interacts with TALDO1 isoform 1. Interacts with CYB1. As to expression, detected more or less in all tissues examined (Ehrlich ascites tumor cells, testis, kidney, spleen, liver, heart, lung, thymus, skeletal muscle, cerebellum and brain (without cerebellum)). Multiple-sized transcripts were highly expressed, especially in testis.

The protein resides in the cytoplasm. It is found in the nucleus. Its function is as follows. Functions in nuclear protein import as an adapter protein for nuclear receptor KPNB1. Binds specifically and directly to substrates containing either a simple or bipartite NLS motif. Docking of the importin/substrate complex to the nuclear pore complex (NPC) is mediated by KPNB1 through binding to nucleoporin FxFG repeats and the complex is subsequently translocated through the pore by an energy requiring, Ran-dependent mechanism. At the nucleoplasmic side of the NPC, Ran binds to importin-beta and the three components separate and importin-alpha and -beta are re-exported from the nucleus to the cytoplasm where GTP hydrolysis releases Ran from importin. The directionality of nuclear import is thought to be conferred by an asymmetric distribution of the GTP- and GDP-bound forms of Ran between the cytoplasm and nucleus. Mediates nuclear import of AARS1, MRTFA and RANBP3. The polypeptide is Importin subunit alpha-3 (Kpna4) (Mus musculus (Mouse)).